We begin with the raw amino-acid sequence, 236 residues long: tRNA (guanine-N(7)-)-methyltransferase (236 aa).

The disordered stretch occupies residues 1–23; the sequence is MEADVQRAQQAQLEKGSSVPPWT. S-adenosyl-L-methionine-binding residues include Asp69, Glu94, Asn121, and Asp144. Asp144 is an active-site residue. The substrate site is built by Lys148 and Asp180.

It belongs to the class I-like SAM-binding methyltransferase superfamily. TrmB family.

It catalyses the reaction guanosine(46) in tRNA + S-adenosyl-L-methionine = N(7)-methylguanosine(46) in tRNA + S-adenosyl-L-homocysteine. The protein operates within tRNA modification; N(7)-methylguanine-tRNA biosynthesis. In terms of biological role, catalyzes the formation of N(7)-methylguanine at position 46 (m7G46) in tRNA. This Synechococcus sp. (strain JA-3-3Ab) (Cyanobacteria bacterium Yellowstone A-Prime) protein is tRNA (guanine-N(7)-)-methyltransferase.